A 182-amino-acid chain; its full sequence is Ribosome maturation factor RimM (182 aa).

The PRC barrel domain occupies 102 to 182 (GEGDYYWKDL…TIEVDWDPGF (81 aa)).

Belongs to the RimM family. In terms of assembly, binds ribosomal protein uS19.

Its subcellular location is the cytoplasm. In terms of biological role, an accessory protein needed during the final step in the assembly of 30S ribosomal subunit, possibly for assembly of the head region. Essential for efficient processing of 16S rRNA. May be needed both before and after RbfA during the maturation of 16S rRNA. It has affinity for free ribosomal 30S subunits but not for 70S ribosomes. In Pectobacterium carotovorum subsp. carotovorum (strain PC1), this protein is Ribosome maturation factor RimM.